A 174-amino-acid chain; its full sequence is ATP synthase subunit delta (174 aa).

This sequence belongs to the ATPase delta chain family. As to quaternary structure, F-type ATPases have 2 components, F(1) - the catalytic core - and F(0) - the membrane proton channel. F(1) has five subunits: alpha(3), beta(3), gamma(1), delta(1), epsilon(1). F(0) has three main subunits: a(1), b(2) and c(10-14). The alpha and beta chains form an alternating ring which encloses part of the gamma chain. F(1) is attached to F(0) by a central stalk formed by the gamma and epsilon chains, while a peripheral stalk is formed by the delta and b chains.

The protein localises to the cell inner membrane. F(1)F(0) ATP synthase produces ATP from ADP in the presence of a proton or sodium gradient. F-type ATPases consist of two structural domains, F(1) containing the extramembraneous catalytic core and F(0) containing the membrane proton channel, linked together by a central stalk and a peripheral stalk. During catalysis, ATP synthesis in the catalytic domain of F(1) is coupled via a rotary mechanism of the central stalk subunits to proton translocation. In terms of biological role, this protein is part of the stalk that links CF(0) to CF(1). It either transmits conformational changes from CF(0) to CF(1) or is implicated in proton conduction. The sequence is that of ATP synthase subunit delta from Francisella tularensis subsp. mediasiatica (strain FSC147).